The following is a 563-amino-acid chain: Putative GMC-type oxidoreductase L128 (563 aa).

The first 21 residues, 1 to 21 (MTSSIVLKFFLIATLLVIANS), serve as a signal peptide directing secretion. 48 to 77 (DYVIVGGGAAGSVLLDKCISYGYKCTLIER) contacts FAD. Catalysis depends on His504, which acts as the Proton acceptor.

This sequence belongs to the GMC oxidoreductase family. FAD is required as a cofactor.

The chain is Putative GMC-type oxidoreductase L128 from Acanthamoeba polyphaga mimivirus (APMV).